The sequence spans 247 residues: Small ribosomal subunit protein uS3 (247 aa).

Residues 38 to 106 enclose the KH type-2 domain; sequence IRDFLSEGLD…QVQLNILEVK (69 aa). Over residues 214 to 226 the composition is skewed to basic and acidic residues; sequence SLMNARDERPSRG. Positions 214 to 247 are disordered; it reads SLMNARDERPSRGRRERPRRGGARRQRAEQKQEG. The segment covering 227–238 has biased composition (basic residues); that stretch reads RRERPRRGGARR.

This sequence belongs to the universal ribosomal protein uS3 family. In terms of assembly, part of the 30S ribosomal subunit. Forms a tight complex with proteins S10 and S14.

In terms of biological role, binds the lower part of the 30S subunit head. Binds mRNA in the 70S ribosome, positioning it for translation. This is Small ribosomal subunit protein uS3 from Corynebacterium jeikeium (strain K411).